A 207-amino-acid polypeptide reads, in one-letter code: dITP/XTP pyrophosphatase (207 aa).

Position 7-12 (7-12) interacts with substrate; the sequence is SNNAKK. D72 functions as the Proton acceptor in the catalytic mechanism. D72 contacts Mg(2+). Substrate contacts are provided by residues S73, 155 to 158, K183, and 188 to 189; these read FGYD and HR.

It belongs to the HAM1 NTPase family. In terms of assembly, homodimer. Mg(2+) serves as cofactor.

It catalyses the reaction XTP + H2O = XMP + diphosphate + H(+). It carries out the reaction dITP + H2O = dIMP + diphosphate + H(+). The enzyme catalyses ITP + H2O = IMP + diphosphate + H(+). Pyrophosphatase that catalyzes the hydrolysis of nucleoside triphosphates to their monophosphate derivatives, with a high preference for the non-canonical purine nucleotides XTP (xanthosine triphosphate), dITP (deoxyinosine triphosphate) and ITP. Seems to function as a house-cleaning enzyme that removes non-canonical purine nucleotides from the nucleotide pool, thus preventing their incorporation into DNA/RNA and avoiding chromosomal lesions. The sequence is that of dITP/XTP pyrophosphatase from Corynebacterium diphtheriae (strain ATCC 700971 / NCTC 13129 / Biotype gravis).